An 834-amino-acid chain; its full sequence is ATP-dependent DNA helicase fml1 (834 aa).

The Helicase ATP-binding domain maps to 80–248 (IVQKALFENV…NVIDSLHISR (169 aa)). 93–100 (LPTGLGKT) contributes to the ATP binding site. A DEAH box motif is present at residues 196 to 199 (DEAH). The Helicase C-terminal domain occupies 416–582 (HLERIVTEYF…GLSLSEKSYR (167 aa)). The interaction with MHF complex stretch occupies residues 650–690 (EESPFEICPVTYSIEQEKKLEKYKRVCLRGLDIHRNRRLSQ). The tract at residues 738 to 769 (NSTDRDTKQPKMHDFRQPLHPNPMTTLKRKGQ) is disordered. The segment covering 740 to 754 (TDRDTKQPKMHDFRQ) has biased composition (basic and acidic residues).

This sequence belongs to the DEAD box helicase family. DEAH subfamily. FANCM sub-subfamily.

It is found in the cytoplasm. The protein localises to the nucleus. Its subcellular location is the nucleolus. It carries out the reaction ATP + H2O = ADP + phosphate + H(+). Its function is as follows. ATP-dependent DNA helicase involved in DNA damage repair by homologous recombination and in genome maintenance. Capable of unwinding D-loops. Plays a role in limiting crossover recombination during mitotic DNA double-strand break (DSB) repair. Component of a FANCM-MHF complex which promotes gene conversion at blocked replication forks, probably by reversal of the stalled fork. FANCM-MHF also promotes non-crossover recombination in meiotic cells. The sequence is that of ATP-dependent DNA helicase fml1 from Schizosaccharomyces pombe (strain 972 / ATCC 24843) (Fission yeast).